A 101-amino-acid chain; its full sequence is Small ribosomal subunit protein uS14A (101 aa).

The interval 29–73 is disordered; it reads AIISSPSTPADARAAAQSELNRQPRDASPVRVRNRDAVDGRPRGH. A compositionally biased stretch (basic and acidic residues) spans 61–70; it reads RNRDAVDGRP.

It belongs to the universal ribosomal protein uS14 family. As to quaternary structure, part of the 30S ribosomal subunit. Contacts proteins S3 and S10.

Binds 16S rRNA, required for the assembly of 30S particles and may also be responsible for determining the conformation of the 16S rRNA at the A site. In Mycolicibacterium gilvum (strain PYR-GCK) (Mycobacterium gilvum (strain PYR-GCK)), this protein is Small ribosomal subunit protein uS14A.